The following is a 586-amino-acid chain: NudC domain-containing protein 1 (586 aa).

Residues 259–278 (KDQPESSEDEKMDEDNKREP) are disordered. One can recognise a CS domain in the interval 275–364 (KREPLYNWHQ…EPGSTWAELV (90 aa)).

Its subcellular location is the cytoplasm. The protein resides in the nucleus. The polypeptide is NudC domain-containing protein 1 (Xenopus tropicalis (Western clawed frog)).